A 484-amino-acid polypeptide reads, in one-letter code: Endoglucanase 3 (484 aa).

An N-terminal signal peptide occupies residues 1-21; that stretch reads MASPFFFVFLLSALSLENTYA. Residue Asp-77 is the Nucleophile of the active site. Asn-370 carries an N-linked (GlcNAc...) asparagine glycan. Catalysis depends on residues His-402, Asp-453, and Glu-462.

The protein belongs to the glycosyl hydrolase 9 (cellulase E) family. In terms of tissue distribution, specifically expressed in root cap cells.

It localises to the secreted. It catalyses the reaction Endohydrolysis of (1-&gt;4)-beta-D-glucosidic linkages in cellulose, lichenin and cereal beta-D-glucans.. Functionally, may be involved in the sloughing (cell-cell separation) of the root cap cells from root tip. This Arabidopsis thaliana (Mouse-ear cress) protein is Endoglucanase 3 (CEL5).